Consider the following 97-residue polypeptide: MTRRGCWPHRIIFSLILLTWTHVTLAALIRSHTFSNWPKPPCKMYYPIDPDYEANCPDVIALVCATNGLNYKNECFFCIDRWEFGPHIEFVKYGKCE.

Positions 1-26 (MTRRGCWPHRIIFSLILLTWTHVTLA) are cleaved as a signal peptide. The region spanning 36-97 (NWPKPPCKMY…IEFVKYGKCE (62 aa)) is the Kazal-like domain. Intrachain disulfides connect C42-C78, C56-C75, and C64-C96.

Restricted to the epididymis, with highest levels in the initial segment, including epithelial cells, lumen, and sperm (at protein level). Localizes to the sperm heads, where it is restricted to the acrosomal region in epididymal spermatozoa, but not in testicular spermatozoa (at protein level).

It localises to the secreted. In terms of biological role, may be a serine protease inhibitor. Essential for sperm maturation and fertility. Inhibits sperm acrosome reaction, protecting sperm from premature reaction. This Rattus norvegicus (Rat) protein is Serine protease inhibitor Kazal-type 13 (Spink13).